Here is a 167-residue protein sequence, read N- to C-terminus: NAD(P)H-quinone oxidoreductase subunit I, chloroplastic (167 aa).

4Fe-4S ferredoxin-type domains follow at residues 55 to 84 and 95 to 124; these read GRIH…VDWK and LNYS…MTEE. [4Fe-4S] cluster is bound by residues cysteine 64, cysteine 67, cysteine 70, cysteine 74, cysteine 104, cysteine 107, cysteine 110, and cysteine 114.

It belongs to the complex I 23 kDa subunit family. As to quaternary structure, NDH is composed of at least 16 different subunits, 5 of which are encoded in the nucleus. [4Fe-4S] cluster serves as cofactor.

Its subcellular location is the plastid. It localises to the chloroplast thylakoid membrane. It catalyses the reaction a plastoquinone + NADH + (n+1) H(+)(in) = a plastoquinol + NAD(+) + n H(+)(out). It carries out the reaction a plastoquinone + NADPH + (n+1) H(+)(in) = a plastoquinol + NADP(+) + n H(+)(out). Its function is as follows. NDH shuttles electrons from NAD(P)H:plastoquinone, via FMN and iron-sulfur (Fe-S) centers, to quinones in the photosynthetic chain and possibly in a chloroplast respiratory chain. The immediate electron acceptor for the enzyme in this species is believed to be plastoquinone. Couples the redox reaction to proton translocation, and thus conserves the redox energy in a proton gradient. The polypeptide is NAD(P)H-quinone oxidoreductase subunit I, chloroplastic (Gossypium barbadense (Sea Island cotton)).